Consider the following 203-residue polypeptide: Small ribosomal subunit protein uS4 (203 aa).

In terms of domain architecture, S4 RNA-binding spans 93-173; it reads RRFDNVVFRA…IPSWIQVDKA (81 aa).

It belongs to the universal ribosomal protein uS4 family. As to quaternary structure, part of the 30S ribosomal subunit. Contacts protein S5. The interaction surface between S4 and S5 is involved in control of translational fidelity.

Functionally, one of the primary rRNA binding proteins, it binds directly to 16S rRNA where it nucleates assembly of the body of the 30S subunit. In terms of biological role, with S5 and S12 plays an important role in translational accuracy. The polypeptide is Small ribosomal subunit protein uS4 (Pelodictyon phaeoclathratiforme (strain DSM 5477 / BU-1)).